Consider the following 532-residue polypeptide: Vesicular acetylcholine transporter unc-17 (532 aa).

The Cytoplasmic segment spans residues 1–31 (MGFNVPVINRDSEILKADAKKWLEQQDNQKK). Residues 32-52 (CVLVIVSIALLLDNMLYMVIV) form a helical membrane-spanning segment. The Lumenal, vesicle portion of the chain corresponds to 53 to 101 (PIIPKYLRDIHNYQVTFEGYHNETSQLANGTYLVREVGGRINFLDEELE). Asn74 and Asn81 each carry an N-linked (GlcNAc...) asparagine glycan. Residues 102 to 121 (LGWLFASKALLQIFVNPFSG) form a helical membrane-spanning segment. The Cytoplasmic portion of the chain corresponds to 122 to 130 (YIIDRVGYE). A helical membrane pass occupies residues 131-151 (IPMILGLCTMFFSTAIFALGK). At 152–160 (SYGVLLFAR) the chain is on the lumenal, vesicle side. The chain crosses the membrane as a helical span at residues 161-180 (SLQGFGSAFADTSGLAMIAD). At 181–191 (RFTEENERSAA) the chain is on the cytoplasmic side. The helical transmembrane segment at 192–213 (LGIALAFISFGCLVAPPFGSVL) threads the bilayer. Residues 214–219 (YSLAGK) lie on the Lumenal, vesicle side of the membrane. The helical transmembrane segment at 220–242 (PVPFLILSFVCLADAIAVFMVIN) threads the bilayer. Residues 243-266 (PHRRGTDSHGEKVQGTPMWRLFMD) are Cytoplasmic-facing. The helical transmembrane segment at 267 to 286 (PFIACCSGALIMANVSLAFL) threads the bilayer. Residues 287 to 303 (EPTITTWMSEMMPDTPG) are Lumenal, vesicle-facing. A helical transmembrane segment spans residues 304–328 (WLVGVIWLPPFFPHVLGVYVTVKML). The Cytoplasmic segment spans residues 329 to 335 (RAFPHHT). Residues 336–356 (WAIAMVGLAMEGIACFAIPYT) form a helical membrane-spanning segment. Over 357–367 (TSVMQLVIPLS) the chain is Lumenal, vesicle. The helical transmembrane segment at 368 to 388 (FVCFGIALIDTSLLPMLGHLV) threads the bilayer. Topologically, residues 389–393 (DTRHV) are cytoplasmic. A helical membrane pass occupies residues 394–412 (SVYGSVYAIADISYSLAYA). Over 413 to 418 (FGPIIA) the chain is Lumenal, vesicle. The helical transmembrane segment at 419-440 (GWIVTNWGFTALNIIIFATNVT) threads the bilayer. The Cytoplasmic segment spans residues 441-532 (YAPVLFLLRK…AGYDPLNPQW (92 aa)).

It belongs to the major facilitator superfamily. Vesicular transporter family. In terms of tissue distribution, detected in most regions of the nervous system including the nerve ring, the ventral and dorsal nerve cords, and the pharyngeal nervous system. Expressed in most cholinergic neurons. In addition, expressed in SIA, SIB and SMB sublateral motor neurons.

The protein localises to the cytoplasmic vesicle. The protein resides in the secretory vesicle. Its subcellular location is the synaptic vesicle membrane. Its function is as follows. Involved in acetylcholine transport into synaptic vesicles. The protein is Vesicular acetylcholine transporter unc-17 of Caenorhabditis elegans.